An 840-amino-acid polypeptide reads, in one-letter code: Protein translocase subunit SecA (840 aa).

ATP is bound by residues Q85, 103–107 (GEGKT), and D492. The interval 787 to 821 (QRERVAKETGASHGGDSQEIKKKPVKKEPKVGRND) is disordered. Positions 802-819 (DSQEIKKKPVKKEPKVGR) are enriched in basic and acidic residues. The Zn(2+) site is built by C823, C825, C834, and C835.

It belongs to the SecA family. Monomer and homodimer. Part of the essential Sec protein translocation apparatus which comprises SecA, SecYEG and auxiliary proteins SecDF. Other proteins may also be involved. Zn(2+) is required as a cofactor.

The protein resides in the cell membrane. The protein localises to the cytoplasm. The catalysed reaction is ATP + H2O + cellular proteinSide 1 = ADP + phosphate + cellular proteinSide 2.. In terms of biological role, part of the Sec protein translocase complex. Interacts with the SecYEG preprotein conducting channel. Has a central role in coupling the hydrolysis of ATP to the transfer of proteins into and across the cell membrane, serving as an ATP-driven molecular motor driving the stepwise translocation of polypeptide chains across the membrane. The protein is Protein translocase subunit SecA of Clostridium perfringens (strain SM101 / Type A).